Here is a 79-residue protein sequence, read N- to C-terminus: RNA-binding protein Hfq (79 aa).

A Sm domain is found at 9 to 69 (DTFLNHLRKE…ISTFTPQRPV (61 aa)).

Belongs to the Hfq family. In terms of assembly, homohexamer.

In terms of biological role, RNA chaperone that binds small regulatory RNA (sRNAs) and mRNAs to facilitate mRNA translational regulation in response to envelope stress, environmental stress and changes in metabolite concentrations. Also binds with high specificity to tRNAs. This Brevibacillus brevis (strain 47 / JCM 6285 / NBRC 100599) protein is RNA-binding protein Hfq.